A 431-amino-acid polypeptide reads, in one-letter code: MSTIIDVYAREVLDSRGNPTVEVEVYTESGAFGRAIVPSGASTGEHEAVELRDGDKSRYLGKGVVNAVNNVNEIIAPEIVGFDVTDQAGIDRAMIELDGTPNKGKLGANAILGVSMAVAHAAADFVGLPLYRYLGGFNAKQLPTPMMNIINGGSHADNNVDFQEFMILPVGAPTFKESIRMGAEVFHALKAVLHDKGLNTAVGDEGGFAPNLGSNREALEVIIEAIEKAGYKAGENVFLGMDVASSEFYNKETGKYDLAGEGRTGLTSAEMVDFYEELCKDFPIISIEDGLDENDWDGHKLLTERLGSKVQLVGDDLFVTNTQKLAEGIEKGISNSILIKVNQIGTLTETFEAIEMAKRAGYTAVVSHRSGETEDATIADIAVATNAGQIKTGSMSRTDRIAKYNQLLRIEDELGEIAVYDGIKSFYNIKR.

Gln-163 contacts (2R)-2-phosphoglycerate. Catalysis depends on Glu-205, which acts as the Proton donor. Positions 242, 288, and 315 each coordinate Mg(2+). The (2R)-2-phosphoglycerate site is built by Lys-340, Arg-369, Ser-370, and Lys-391. Lys-340 serves as the catalytic Proton acceptor.

The protein belongs to the enolase family. Requires Mg(2+) as cofactor.

The protein localises to the cytoplasm. Its subcellular location is the secreted. It is found in the cell surface. It catalyses the reaction (2R)-2-phosphoglycerate = phosphoenolpyruvate + H2O. Its pathway is carbohydrate degradation; glycolysis; pyruvate from D-glyceraldehyde 3-phosphate: step 4/5. In terms of biological role, catalyzes the reversible conversion of 2-phosphoglycerate (2-PG) into phosphoenolpyruvate (PEP). It is essential for the degradation of carbohydrates via glycolysis. The chain is Enolase from Bacillus cereus (strain AH187).